A 156-amino-acid polypeptide reads, in one-letter code: Small ribosomal subunit protein uS7 (156 aa).

This sequence belongs to the universal ribosomal protein uS7 family. In terms of assembly, part of the 30S ribosomal subunit. Contacts proteins S9 and S11.

Its function is as follows. One of the primary rRNA binding proteins, it binds directly to 16S rRNA where it nucleates assembly of the head domain of the 30S subunit. Is located at the subunit interface close to the decoding center, probably blocks exit of the E-site tRNA. The sequence is that of Small ribosomal subunit protein uS7 from Deinococcus deserti (strain DSM 17065 / CIP 109153 / LMG 22923 / VCD115).